The sequence spans 620 residues: Glutathione-regulated potassium-efflux system protein KefC (620 aa).

12 consecutive transmembrane segments (helical) span residues 4–24, 26–46, 54–74, 90–110, 114–134, 149–169, 178–198, 218–238, 270–290, 294–314, 327–347, and 359–379; these read HTLI…PIAV, LGLG…PWGL, SILH…GLEL, GALQ…LLGL, VAEL…MQAM, FAVL…IPLL, MGAF…VVLL, VFSA…EEVG, GLLL…GTLL, LRIV…LWLI, WFAV…GTAQ, and SLTL…VILN. The RCK N-terminal domain maps to 399 to 518; it reads QPRVIIAGFG…AGVEKPERET (120 aa). The segment at 597 to 620 is disordered; the sequence is GWQGTEEGKHTGNMADEPETKPSS.

It belongs to the monovalent cation:proton antiporter 2 (CPA2) transporter (TC 2.A.37) family. KefC subfamily. In terms of assembly, homodimer. Interacts with the regulatory subunit KefF.

It localises to the cell inner membrane. In terms of biological role, pore-forming subunit of a potassium efflux system that confers protection against electrophiles. Catalyzes K(+)/H(+) antiport. This chain is Glutathione-regulated potassium-efflux system protein KefC, found in Shigella sonnei (strain Ss046).